Reading from the N-terminus, the 404-residue chain is Corticosteroid-binding globulin (404 aa).

An N-terminal signal peptide occupies residues 1 to 30 (MAWSTRTMMSLALYTCFLWLLTSGLKTVQS). Residues Asn95 and Asn225 are each glycosylated (N-linked (GlcNAc...) asparagine). Gln253 serves as a coordination point for cortisol. N-linked (GlcNAc...) asparagine glycosylation is present at Asn259. Glu285 contributes to the cortisol binding site. Residue Asn326 is glycosylated (N-linked (GlcNAc...) asparagine). Trp392 is a cortisol binding site.

This sequence belongs to the serpin family. Expressed by the liver; secreted in plasma.

The protein resides in the secreted. Major transport protein for glucocorticoids and progestins in the blood of almost all vertebrate species. This Mesocricetus auratus (Golden hamster) protein is Corticosteroid-binding globulin (SERPINA6).